A 585-amino-acid polypeptide reads, in one-letter code: Arginine--tRNA ligase (585 aa).

A 'HIGH' region motif is present at residues 127–137 (PNTNKPLHVGH).

Belongs to the class-I aminoacyl-tRNA synthetase family. In terms of assembly, monomer.

The protein resides in the cytoplasm. The enzyme catalyses tRNA(Arg) + L-arginine + ATP = L-arginyl-tRNA(Arg) + AMP + diphosphate. This Borreliella afzelii (strain PKo) (Borrelia afzelii) protein is Arginine--tRNA ligase.